We begin with the raw amino-acid sequence, 136 residues long: Preprocaerulein type I' (136 aa).

Residues 1–26 (MFKGILLCVLFAVLSANPLSQPEGFA) form the signal peptide. Residues 27–136 (DEERDVRGLA…NALGGAPQQR (110 aa)) constitute a propeptide that is removed on maturation. The disordered stretch occupies residues 82–101 (GAPQQREANDERRFADDEDD).

This sequence belongs to the gastrin/cholecystokinin family. Expressed by the skin glands.

Its subcellular location is the secreted. Its function is as follows. The pharmacological activities of caerulein are quite similar to the physiological activities of gastrin and related peptides. This is Preprocaerulein type I' from Xenopus laevis (African clawed frog).